The primary structure comprises 95 residues: Protein TusB (95 aa).

Belongs to the DsrH/TusB family. As to quaternary structure, heterohexamer, formed by a dimer of trimers. The hexameric TusBCD complex contains 2 copies each of TusB, TusC and TusD. The TusBCD complex interacts with TusE.

The protein resides in the cytoplasm. Part of a sulfur-relay system required for 2-thiolation of 5-methylaminomethyl-2-thiouridine (mnm(5)s(2)U) at tRNA wobble positions. This chain is Protein TusB, found in Salmonella dublin (strain CT_02021853).